The primary structure comprises 81 residues: Relaxin-like protein AGF (81 aa).

Intrachain disulfides connect Cys14–Cys66, Cys26–Cys79, and Cys65–Cys70. Asn37 carries an N-linked (GlcNAc...) asparagine glycan.

This sequence belongs to the insulin family. Heterodimer of a B chain and an A chain linked by two disulfide bonds.

The protein localises to the secreted. Functionally, uncertain. The polypeptide is Relaxin-like protein AGF (Hypanus sabinus (Atlantic stingray)).